Reading from the N-terminus, the 239-residue chain is uncharacterized protein (239 aa).

Helical transmembrane passes span leucine 125–tyrosine 144, isoleucine 149–leucine 171, and serine 197–phenylalanine 216.

It localises to the cell membrane. This is an uncharacterized protein from Aquifex aeolicus (strain VF5).